We begin with the raw amino-acid sequence, 198 residues long: Recombination protein RecR (198 aa).

The C4-type zinc-finger motif lies at 57-72; sequence CSVCGNLTDEDPCSIC. The region spanning 80–175 is the Toprim domain; that stretch reads SMILVVEDSK…KVTRLARGLA (96 aa).

This sequence belongs to the RecR family.

Functionally, may play a role in DNA repair. It seems to be involved in an RecBC-independent recombinational process of DNA repair. It may act with RecF and RecO. The chain is Recombination protein RecR from Streptococcus uberis (strain ATCC BAA-854 / 0140J).